A 436-amino-acid chain; its full sequence is Xylose isomerase (436 aa).

Active-site residues include histidine 100 and aspartate 103. 7 residues coordinate Mg(2+): glutamate 231, glutamate 267, histidine 270, aspartate 295, aspartate 306, aspartate 308, and aspartate 338.

This sequence belongs to the xylose isomerase family. Homotetramer. Mg(2+) is required as a cofactor.

Its subcellular location is the cytoplasm. It catalyses the reaction alpha-D-xylose = alpha-D-xylulofuranose. This chain is Xylose isomerase, found in Rhizobium etli (strain CIAT 652).